Consider the following 265-residue polypeptide: uncharacterized protein (265 aa).

This is an uncharacterized protein from Autographa californica nuclear polyhedrosis virus (AcMNPV).